Reading from the N-terminus, the 37-residue chain is Large ribosomal subunit protein bL36 (37 aa).

The protein belongs to the bacterial ribosomal protein bL36 family.

The sequence is that of Large ribosomal subunit protein bL36 from Streptomyces griseus subsp. griseus (strain JCM 4626 / CBS 651.72 / NBRC 13350 / KCC S-0626 / ISP 5235).